The primary structure comprises 580 residues: Arginine--tRNA ligase (580 aa).

Residues 131 to 141 (ANPTGPLHVGH) carry the 'HIGH' region motif.

Belongs to the class-I aminoacyl-tRNA synthetase family. In terms of assembly, monomer.

Its subcellular location is the cytoplasm. The catalysed reaction is tRNA(Arg) + L-arginine + ATP = L-arginyl-tRNA(Arg) + AMP + diphosphate. This Roseobacter denitrificans (strain ATCC 33942 / OCh 114) (Erythrobacter sp. (strain OCh 114)) protein is Arginine--tRNA ligase.